Consider the following 83-residue polypeptide: Small ribosomal subunit protein bS16c (83 aa).

The protein belongs to the bacterial ribosomal protein bS16 family.

The protein resides in the plastid. Its subcellular location is the chloroplast. This is Small ribosomal subunit protein bS16c from Chaetosphaeridium globosum (Charophycean green alga).